The following is a 478-amino-acid chain: MHKMMVVEKERSIEERLLQLKNQNDDSECRITACVILSTFIAVCGSFSFGVSLGYTSGAEIGIMKDLDLSIAQFSAFASLSTLGAAIGALFSGKMAIILGRRKTMWVSDLLCIIGWFSIAFAKDVMWLNFGRISSGIGLGLISYVVPVYIAEISPKHVRGTFTFTNQLLQNSGLAMVYFSGNFLNWRILALLGALPCFIQVIGLFFVPESPRWLAKVGSDKELENSLLRLRGGNADISREASDIEVMTKMVENDSKSSFCDLFQRKYRYTLVVGIGLMLIQQFSGSSAVLSYASTILRKAGFSVTIGSTLLGLFMIPKAMIGVILVDKWGRRPLLLTSVSGMCITSMLIGVAFTLQKMQLLPELTPVFTFICVTLYIGTYAIGLGGLPWVIMSEIFPMNIKVTAGSIVTLVSWSSSSIVTYAFNFLLEWSTQGTFYVFGAVGGLALLFIWLLVPETKGLSLEEIQASLIREPDRINQS.

The next 12 helical transmembrane spans lie at 31–51, 71–91, 110–130, 133–153, 162–180, 188–208, 270–290, 306–326, 333–353, 367–387, 407–427, and 433–453; these read ITAC…SFGV, IAQF…GALF, LLCI…WLNF, ISSG…IAEI, FTFT…VYFS, ILAL…FFVP, TLVV…SAVL, IGST…VILV, PLLL…GVAF, VFTF…LGGL, IVTL…NFLL, and GTFY…WLLV.

The protein belongs to the major facilitator superfamily. Sugar transporter (TC 2.A.1.1) family. In terms of tissue distribution, expressed in leaf vasculature, stem and flowers.

The protein resides in the membrane. Its function is as follows. Sugar transporter. This Arabidopsis thaliana (Mouse-ear cress) protein is Sugar transporter ERD6-like 18 (SFP2).